A 143-amino-acid chain; its full sequence is Peptide methionine sulfoxide reductase MsrB (143 aa).

One can recognise a MsrB domain in the interval 5–127 (NEELKKKLTP…NSAALRFIPK (123 aa)). The Nucleophile role is filled by Cys-116.

The protein belongs to the MsrB Met sulfoxide reductase family.

It catalyses the reaction L-methionyl-[protein] + [thioredoxin]-disulfide + H2O = L-methionyl-(R)-S-oxide-[protein] + [thioredoxin]-dithiol. In Halalkalibacterium halodurans (strain ATCC BAA-125 / DSM 18197 / FERM 7344 / JCM 9153 / C-125) (Bacillus halodurans), this protein is Peptide methionine sulfoxide reductase MsrB.